The following is a 326-amino-acid chain: ATP-dependent 6-phosphofructokinase (326 aa).

G14 provides a ligand contact to ATP. ADP is bound at residue R24–R28. ATP is bound by residues R75 to F76 and G105 to S108. Position 106 (N106) interacts with Mg(2+). T129 to D131 contacts substrate. The active-site Proton acceptor is D131. Residue R158 coordinates ADP. Substrate-binding positions include R166 and M173–R175. ADP is bound by residues G189–E191, K215, and K216–A218. Substrate-binding positions include E225, R248, and H254–R257.

It belongs to the phosphofructokinase type A (PFKA) family. ATP-dependent PFK group I subfamily. Prokaryotic clade 'B1' sub-subfamily. Homotetramer. The cofactor is Mg(2+).

Its subcellular location is the cytoplasm. The catalysed reaction is beta-D-fructose 6-phosphate + ATP = beta-D-fructose 1,6-bisphosphate + ADP + H(+). The protein operates within carbohydrate degradation; glycolysis; D-glyceraldehyde 3-phosphate and glycerone phosphate from D-glucose: step 3/4. With respect to regulation, allosterically activated by ADP and other diphosphonucleosides, and allosterically inhibited by phosphoenolpyruvate. Functionally, catalyzes the phosphorylation of D-fructose 6-phosphate to fructose 1,6-bisphosphate by ATP, the first committing step of glycolysis. The sequence is that of ATP-dependent 6-phosphofructokinase from Coxiella burnetii (strain RSA 493 / Nine Mile phase I).